A 130-amino-acid chain; its full sequence is Fumarate reductase subunit C (130 aa).

3 helical membrane passes run 30–50, 60–80, and 110–130; these read EGTS…VFAL, FVSF…LFAA, and IKAL…VALL.

This sequence belongs to the FrdC family. As to quaternary structure, part of an enzyme complex containing four subunits: a flavoprotein (FrdA), an iron-sulfur protein (FrdB), and two hydrophobic anchor proteins (FrdC and FrdD).

It localises to the cell inner membrane. Functionally, two distinct, membrane-bound, FAD-containing enzymes are responsible for the catalysis of fumarate and succinate interconversion; fumarate reductase is used in anaerobic growth, and succinate dehydrogenase is used in aerobic growth. Anchors the catalytic components of the fumarate reductase complex to the cell inner membrane, binds quinones. This chain is Fumarate reductase subunit C, found in Yersinia pseudotuberculosis serotype O:1b (strain IP 31758).